A 374-amino-acid chain; its full sequence is 3-dehydroquinate synthase (374 aa).

This sequence belongs to the archaeal-type DHQ synthase family.

The catalysed reaction is 2-amino-2,3,7-trideoxy-D-lyxo-hept-6-ulosonate + NAD(+) + H2O = 3-dehydroquinate + NH4(+) + NADH + H(+). Its function is as follows. Catalyzes the oxidative deamination and cyclization of 2-amino-3,7-dideoxy-D-threo-hept-6-ulosonic acid (ADH) to yield 3-dehydroquinate (DHQ), which is fed into the canonical shikimic pathway of aromatic amino acid biosynthesis. The polypeptide is 3-dehydroquinate synthase (Methanothermobacter thermautotrophicus (strain ATCC 29096 / DSM 1053 / JCM 10044 / NBRC 100330 / Delta H) (Methanobacterium thermoautotrophicum)).